The sequence spans 559 residues: MRYIELAQLYQKLEKTTMKLIKTRLVADFLKKVPEDHLEFIPYLILGDVFPEWDERELGVGEKLLIKAVSMATGIDSKEIENSVKDTGDLGESIALAVKKRKQKSFFSQPLTIKRVYQTLVKVAETTGEGSQDKKMKYLANLFMDAEPIEAKYIARTVLGTMRTGVAEGLLRDAISLAFNVKVELVERAYMLTSDFGFVAKIAKTEGNDGLAKVTIQIGKPIKPMLAQQAANIKEALLEMGGEAEFEIKYDGARVQVHKDGEKVTIYSRRLENVTRAIPEIVEAIKEALKPTKAIVEGELVAIGEDGRPLPFQYVLRRFRRKYNIEEMMEKIPLELNLFDVLYVDGVSLIDTKFMERRKKLEEIVETNGKVKIAENLITKNVEEAEQFYKRALEMGHEGLMAKRLDAVYEPGNRGKKWLKIKPTMENLDLVIIGAEWGEGRRAHLLGSFILGAYDPETGEFLEVGKVGSGFTDDDLVEFTKMLKPLIIKEEGKRVWIQPKVVIEVTYQEIQKSPKYRSGFALRFPRYVALREDKGPEDADTIERIAQLYELQERMKGKV.

Glu-247 serves as a coordination point for ATP. Lys-249 functions as the N6-AMP-lysine intermediate in the catalytic mechanism. Positions 254, 269, 299, 339, 414, and 420 each coordinate ATP.

The protein belongs to the ATP-dependent DNA ligase family. Mg(2+) serves as cofactor.

The catalysed reaction is ATP + (deoxyribonucleotide)n-3'-hydroxyl + 5'-phospho-(deoxyribonucleotide)m = (deoxyribonucleotide)n+m + AMP + diphosphate.. DNA ligase that seals nicks in double-stranded DNA during DNA replication, DNA recombination and DNA repair. The protein is DNA ligase of Pyrococcus abyssi (strain GE5 / Orsay).